A 27-amino-acid chain; its full sequence is CAAFGSFCGLPGLVDCCSGRCFIVCLL.

3 disulfides stabilise this stretch: Cys1/Cys17, Cys8/Cys21, and Cys16/Cys25.

The protein belongs to the conotoxin O1 superfamily. As to expression, expressed by the venom duct.

Its subcellular location is the secreted. Functionally, delta-conotoxins bind to site 6 of voltage-gated sodium channels (Nav) and inhibit the inactivation process. This toxin inhibits tetrodotoxin(TTX)-sensitive sodium channels. A test on mouse Nav1.6/SCN8A confirms this sensitivity. The chain is Delta-conotoxin TsVIA from Conus tessulatus (Tessellate cone).